We begin with the raw amino-acid sequence, 178 residues long: Ribosome maturation factor RimM (178 aa).

A PRC barrel domain is found at 99–178 (EGDFYWHDLI…TIEVDWDAGF (80 aa)).

Belongs to the RimM family. As to quaternary structure, binds ribosomal protein uS19.

It is found in the cytoplasm. Its function is as follows. An accessory protein needed during the final step in the assembly of 30S ribosomal subunit, possibly for assembly of the head region. Essential for efficient processing of 16S rRNA. May be needed both before and after RbfA during the maturation of 16S rRNA. It has affinity for free ribosomal 30S subunits but not for 70S ribosomes. This chain is Ribosome maturation factor RimM, found in Mannheimia succiniciproducens (strain KCTC 0769BP / MBEL55E).